The chain runs to 225 residues: Pyrimidine 5'-nucleotidase YjjG (225 aa).

The Nucleophile role is filled by D9.

It belongs to the HAD-like hydrolase superfamily. YjjG family. As to quaternary structure, monomer, homodimer and possibly homotetramer in solution. The cofactor is Mn(2+). Mg(2+) is required as a cofactor. Requires Co(2+) as cofactor.

The protein localises to the cytoplasm. The catalysed reaction is a ribonucleoside 5'-phosphate + H2O = a ribonucleoside + phosphate. It carries out the reaction a 2'-deoxyribonucleoside 5'-phosphate + H2O = a 2'-deoxyribonucleoside + phosphate. It catalyses the reaction UMP + H2O = uridine + phosphate. The enzyme catalyses dUMP + H2O = 2'-deoxyuridine + phosphate. The catalysed reaction is dTMP + H2O = thymidine + phosphate. Its activity is regulated as follows. In contrast to nucleotidases from other families, is not inhibited by ribo- and deoxyribonucleoside di- and triphosphates. In terms of biological role, nucleotidase that shows high phosphatase activity toward non-canonical pyrimidine nucleotides and three canonical nucleoside 5'-monophosphates (UMP, dUMP, and dTMP), and very low activity against TDP, IMP, UDP, GMP, dGMP, AMP, dAMP, and 6-phosphogluconate. Appears to function as a house-cleaning nucleotidase in vivo, since the general nucleotidase activity of YjjG allows it to protect cells against non-canonical pyrimidine derivatives such as 5-fluoro-2'-deoxyuridine, 5-fluorouridine, 5-fluoroorotate, 5-fluorouracil, and 5-aza-2'-deoxycytidine, and prevents the incorporation of potentially mutagenic nucleotides into DNA. Its dUMP phosphatase activity that catalyzes the hydrolysis of dUMP to deoxyuridine is necessary for thymine utilization via the thymine salvage pathway. Is strictly specific to substrates with 5'-phosphates and shows no activity against nucleoside 2'- or 3'-monophosphates. The sequence is that of Pyrimidine 5'-nucleotidase YjjG (yjjG) from Escherichia coli (strain K12).